Reading from the N-terminus, the 355-residue chain is tRNA N6-adenosine threonylcarbamoyltransferase (355 aa).

The Fe cation site is built by His-110 and His-114. Substrate is bound by residues Leu-132–Gly-136, Asp-165, Gly-178, Asp-182, and Asn-288. Asp-316 contributes to the Fe cation binding site.

The protein belongs to the KAE1 / TsaD family. Requires Fe(2+) as cofactor.

It is found in the cytoplasm. The catalysed reaction is L-threonylcarbamoyladenylate + adenosine(37) in tRNA = N(6)-L-threonylcarbamoyladenosine(37) in tRNA + AMP + H(+). Its function is as follows. Required for the formation of a threonylcarbamoyl group on adenosine at position 37 (t(6)A37) in tRNAs that read codons beginning with adenine. Is involved in the transfer of the threonylcarbamoyl moiety of threonylcarbamoyl-AMP (TC-AMP) to the N6 group of A37, together with TsaE and TsaB. TsaD likely plays a direct catalytic role in this reaction. The polypeptide is tRNA N6-adenosine threonylcarbamoyltransferase (Lawsonia intracellularis (strain PHE/MN1-00)).